Reading from the N-terminus, the 191-residue chain is Programmed cell death protein 6 (191 aa).

The residue at position 2 (Ala2) is an N-acetylalanine. EF-hand domains are found at residues Pro23–Thr58, Pro59–Trp89, Lys90–Arg125, Leu126–Leu161, and Thr162–Val191. Ca(2+) is bound by residues Asp36, Asp38, Ser40, Val42, and Glu47. Residues Asp103, Asp105, Ser107, Met109, and Glu114 each coordinate Ca(2+). Mg(2+) is bound by residues Asp169, Asp171, Asp173, and Trp175.

As to quaternary structure, homodimer and heterodimer; heterodimerizes (via the EF-hand 5) with PEF1. Isoform 1 and isoform 2 self-associate; probably forming homodimers. Interacts with CPNE4 (via VWFA domain). Interacts with PDCD6IP; the interaction is calcium-dependent. Interacts with RBM22. Interacts with PLSCR4. Interacts with ANXA7 and TSG101. Interacts with DAPK1. Interacts with SEC31A; the interaction is calcium-dependent and promotes monoubiquitination of SEC31A. Interacts with ANXA11 (via N-terminus); the interaction is calcium-dependent. Interacts with PLSCR3 (via N-terminus); the interaction is calcium-dependent. Interacts with MCOLN1; the interaction is calcium-dependent. Interacts with KDR; the interaction is calcium-dependent. Interacts with HEBP2; the interaction is calcium-dependent. Interacts with TFG. Isoform 1: Interacts with SHISA5, leading to stabilize it. Isoform 2: Does not interact with SHISA5. Isoform 2: Does not interact with PDCD6IP, TSG101, ANXA7 and ANXA11.

It localises to the endoplasmic reticulum membrane. The protein resides in the cytoplasmic vesicle. It is found in the COPII-coated vesicle membrane. Its subcellular location is the cytoplasm. The protein localises to the nucleus. It localises to the endosome. Functionally, calcium sensor that plays a key role in processes such as endoplasmic reticulum (ER)-Golgi vesicular transport, endosomal biogenesis or membrane repair. Acts as an adapter that bridges unrelated proteins or stabilizes weak protein-protein complexes in response to calcium: calcium-binding triggers exposure of apolar surface, promoting interaction with different sets of proteins thanks to 3 different hydrophobic pockets, leading to translocation to membranes. Involved in ER-Golgi transport by promoting the association between PDCD6IP and TSG101, thereby bridging together the ESCRT-III and ESCRT-I complexes. Together with PEF1, acts as a calcium-dependent adapter for the BCR(KLHL12) complex, a complex involved in ER-Golgi transport by regulating the size of COPII coats. In response to cytosolic calcium increase, the heterodimer formed with PEF1 interacts with, and bridges together the BCR(KLHL12) complex and SEC31 (SEC31A or SEC31B), promoting monoubiquitination of SEC31 and subsequent collagen export, which is required for neural crest specification. Involved in the regulation of the distribution and function of MCOLN1 in the endosomal pathway. Promotes localization and polymerization of TFG at endoplasmic reticulum exit site. Required for T-cell receptor-, Fas-, and glucocorticoid-induced apoptosis. May mediate Ca(2+)-regulated signals along the death pathway: interaction with DAPK1 can accelerate apoptotic cell death by increasing caspase-3 activity. Its role in apoptosis may however be indirect, as suggested by knockout experiments. May inhibit KDR/VEGFR2-dependent angiogenesis; the function involves inhibition of VEGF-induced phosphorylation of the Akt signaling pathway. Its function is as follows. Has a lower Ca(2+) affinity than isoform 1. This chain is Programmed cell death protein 6 (Pdcd6), found in Mus musculus (Mouse).